We begin with the raw amino-acid sequence, 102 residues long: NADH-quinone oxidoreductase subunit K 1 (102 aa).

The next 3 membrane-spanning stretches (helical) occupy residues 5 to 25, 30 to 50, and 62 to 82; these read LYEV…CVVA, VIMM…TFVG, and VFSL…LAMV.

The protein belongs to the complex I subunit 4L family. As to quaternary structure, NDH-1 is composed of 14 different subunits. Subunits NuoA, H, J, K, L, M, N constitute the membrane sector of the complex.

It is found in the cell inner membrane. It catalyses the reaction a quinone + NADH + 5 H(+)(in) = a quinol + NAD(+) + 4 H(+)(out). NDH-1 shuttles electrons from NADH, via FMN and iron-sulfur (Fe-S) centers, to quinones in the respiratory chain. The immediate electron acceptor for the enzyme in this species is believed to be ubiquinone. Couples the redox reaction to proton translocation (for every two electrons transferred, four hydrogen ions are translocated across the cytoplasmic membrane), and thus conserves the redox energy in a proton gradient. The chain is NADH-quinone oxidoreductase subunit K 1 from Geobacter sp. (strain M21).